A 315-amino-acid chain; its full sequence is Homocysteine S-methyltransferase YbgG (315 aa).

In terms of domain architecture, Hcy-binding spans 2–309 (NPIQHILDTY…ENIQEIAAWA (308 aa)). Zn(2+)-binding residues include Cys-229, Cys-294, and Cys-295.

Requires Zn(2+) as cofactor.

It catalyses the reaction S-methyl-L-methionine + L-homocysteine = 2 L-methionine + H(+). The chain is Homocysteine S-methyltransferase YbgG (ybgG) from Bacillus subtilis (strain 168).